Consider the following 1809-residue polypeptide: Stereocilin (1809 aa).

A signal peptide spans 1–22 (MALSLQPQLLLLLSLLPQEVTS). N-linked (GlcNAc...) asparagine glycans are attached at residues Asn63, Asn200, Asn295, Asn352, and Asn364. A disordered region spans residues 376–426 (PATPRPPPTTPRPPPTTPQPPPTTTQPIPDTTQPPPVTPRPPPTTPQPPPS). Composition is skewed to pro residues over residues 378-399 (TPRPPPTTPRPPPTTPQPPPTT) and 407-426 (TQPPPVTPRPPPTTPQPPPS). Asn467, Asn516, Asn580, Asn605, Asn696, Asn860, Asn952, Asn1000, Asn1213, and Asn1308 each carry an N-linked (GlcNAc...) asparagine glycan.

This sequence belongs to the stereocilin family. In terms of tissue distribution, strongly expressed in the inner ear, detected in the testis, and barely detected in the eye. Detected in the six sensory areas of the inner ear by immunofluorescence. Expressed only in the sensory hair cells and associated with the stereocilia, the stiff microvilli forming the structure for mechanoreception of sound stimulation.

Its subcellular location is the cell surface. The protein resides in the cell projection. It localises to the kinocilium. It is found in the stereocilium. Its function is as follows. Essential to the formation of horizontal top connectors between outer hair cell stereocilia. This chain is Stereocilin (Strc), found in Mus musculus (Mouse).